Here is a 565-residue protein sequence, read N- to C-terminus: Ubiquitin carboxyl-terminal hydrolase 21 (565 aa).

Residues 1-14 show a composition bias toward basic and acidic residues; that stretch reads MPQASEHRLGRTRE. Residues 1–103 form a disordered region; it reads MPQASEHRLG…PPPTVALPLP (103 aa). Over residues 48–57 the composition is skewed to pro residues; it reads MLRPLPPRPG. The span at 58-70 shows a compositional bias: basic and acidic residues; it reads LPDERLKKLELGR. The Nuclear export signal motif lies at 134 to 152; the sequence is ELGAALSRLALRPEPPTLR. One can recognise a USP domain in the interval 212 to 558; sequence VGLRNLGNTC…EGYVLFYQLM (347 aa). The Nucleophile role is filled by Cys221. The Zn(2+) site is built by Cys384, Cys387, Cys437, and Cys440. The Proton acceptor role is filled by His518.

Belongs to the peptidase C19 family. USP21 subfamily. In terms of assembly, interacts with BEND3. As to expression, highly expressed in heart, pancreas and skeletal muscle. Also expressed in brain, placenta, liver and kidney, and at very low level in lung.

Its subcellular location is the cytoplasm. It localises to the nucleus. It catalyses the reaction Thiol-dependent hydrolysis of ester, thioester, amide, peptide and isopeptide bonds formed by the C-terminal Gly of ubiquitin (a 76-residue protein attached to proteins as an intracellular targeting signal).. Functionally, deubiquitinates histone H2A, a specific tag for epigenetic transcriptional repression, thereby acting as a coactivator. Deubiquitination of histone H2A releaves the repression of di- and trimethylation of histone H3 at 'Lys-4', resulting in regulation of transcriptional initiation. Regulates gene expression via histone H2A deubiquitination. Deubiquitinates BAZ2A/TIP5 leading to its stabilization. Also capable of removing NEDD8 from NEDD8 conjugates but has no effect on Sentrin-1 conjugates. Also acts as a negative regulator of the ribosome quality control (RQC) by mediating deubiquitination of 40S ribosomal proteins RPS10/eS10 and RPS20/uS10, thereby antagonizing ZNF598-mediated 40S ubiquitination. The sequence is that of Ubiquitin carboxyl-terminal hydrolase 21 from Homo sapiens (Human).